The following is a 328-amino-acid chain: tRNA-modifying protein YgfZ (328 aa).

Residues W28 and W190 each coordinate folate.

Belongs to the tRNA-modifying YgfZ family.

The protein localises to the cytoplasm. Functionally, folate-binding protein involved in regulating the level of ATP-DnaA and in the modification of some tRNAs. It is probably a key factor in regulatory networks that act via tRNA modification, such as initiation of chromosomal replication. This Sodalis glossinidius (strain morsitans) protein is tRNA-modifying protein YgfZ.